The primary structure comprises 69 residues: Large ribosomal subunit protein eL38 (69 aa).

This sequence belongs to the eukaryotic ribosomal protein eL38 family.

In Solanum lycopersicum (Tomato), this protein is Large ribosomal subunit protein eL38 (RPL38).